The following is a 382-amino-acid chain: MSQSNNVTDLARANIRALTPYMSARRLGGNGDVWLNANEYPLGTEYQLTTQTFNRYPECQPKHVIERYAAYAGLPPEQVLVSRGADEGIELLIRAFCEPGQDAILFCPPTYGMYAVSAETFGVERRTVPAQADWQLDLPAIANNLDQVKVIYVCSPNNPTGNLINPADLQAVLALAQGRAIVAIDEAYIEFCPQASVSNWLKDYPNLVILRTLSKAFALAGLRCGFTLANSDIIQLLLKVIAPYPLSTPVADIAAQALSPKGIEQMRQRVSEVRANRAWLQSALQDCACVEQVFTSESNYLLARFTASSSVFNALWDQGIILRDQNKQPGLANCLRITIGTRQECERVIAALAPLPGIDNSNNIDNQSKTHSQTSSIRKGTI.

Lys-215 carries the post-translational modification N6-(pyridoxal phosphate)lysine. The segment at 360 to 382 (NSNNIDNQSKTHSQTSSIRKGTI) is disordered.

Belongs to the class-II pyridoxal-phosphate-dependent aminotransferase family. Histidinol-phosphate aminotransferase subfamily. As to quaternary structure, homodimer. Pyridoxal 5'-phosphate serves as cofactor.

It catalyses the reaction L-histidinol phosphate + 2-oxoglutarate = 3-(imidazol-4-yl)-2-oxopropyl phosphate + L-glutamate. Its pathway is amino-acid biosynthesis; L-histidine biosynthesis; L-histidine from 5-phospho-alpha-D-ribose 1-diphosphate: step 7/9. The chain is Histidinol-phosphate aminotransferase from Yersinia pseudotuberculosis serotype IB (strain PB1/+).